Here is a 294-residue protein sequence, read N- to C-terminus: 4-diphosphocytidyl-2-C-methyl-D-erythritol kinase (294 aa).

Residue Lys-15 is part of the active site. 101-111 (PSEAGLGGGSS) provides a ligand contact to ATP. Asp-143 is an active-site residue.

It belongs to the GHMP kinase family. IspE subfamily.

It carries out the reaction 4-CDP-2-C-methyl-D-erythritol + ATP = 4-CDP-2-C-methyl-D-erythritol 2-phosphate + ADP + H(+). The protein operates within isoprenoid biosynthesis; isopentenyl diphosphate biosynthesis via DXP pathway; isopentenyl diphosphate from 1-deoxy-D-xylulose 5-phosphate: step 3/6. In terms of biological role, catalyzes the phosphorylation of the position 2 hydroxy group of 4-diphosphocytidyl-2C-methyl-D-erythritol. This chain is 4-diphosphocytidyl-2-C-methyl-D-erythritol kinase, found in Fusobacterium nucleatum subsp. nucleatum (strain ATCC 25586 / DSM 15643 / BCRC 10681 / CIP 101130 / JCM 8532 / KCTC 2640 / LMG 13131 / VPI 4355).